Consider the following 70-residue polypeptide: LVVSVTSRRVRFWDDFERDENFEEERPYLRNVKRACNDYKSSSYCRSVGSRNECGIHKYRMYCRKTCGSC.

The ShKT domain maps to 36–70 (CNDYKSSSYCRSVGSRNECGIHKYRMYCRKTCGSC). 3 disulfide bridges follow: C36/C70, C45/C63, and C54/C67. The segment at 58–59 (KY) is crucial for binding to potassium channels.

It belongs to the sea anemone type 1 potassium channel toxin family. Type 1b subfamily.

The protein resides in the secreted. Its subcellular location is the nematocyst. Inhibits voltage-gated potassium channels (Kv1/KCNA). The sequence is that of U-actitoxin-Avd11a from Anemonia viridis (Snakelocks anemone).